An 868-amino-acid chain; its full sequence is Translation initiation factor IF-2 (868 aa).

Disordered regions lie at residues 158 to 178 and 200 to 269; these read VKEEEKINSEENTAESQDELT and KKEE…KYRE. Residues 200 to 209 are compositionally biased toward basic and acidic residues; it reads KKEEVKPEKV. The segment covering 249 to 260 has biased composition (basic residues); it reads RGGRSKFKKKKG. One can recognise a tr-type G domain in the interval 368 to 537; that stretch reads GRAPVVTIMG…LLQSEVLELK (170 aa). The tract at residues 377–384 is G1; that stretch reads GHVDHGKT. 377–384 serves as a coordination point for GTP; the sequence is GHVDHGKT. Residues 402-406 form a G2 region; sequence GITQH. The G3 stretch occupies residues 423–426; that stretch reads DTPG. GTP contacts are provided by residues 423-427 and 477-480; these read DTPGH and NKMD. The segment at 477–480 is G4; the sequence is NKMD. The tract at residues 513–515 is G5; the sequence is SAK.

The protein belongs to the TRAFAC class translation factor GTPase superfamily. Classic translation factor GTPase family. IF-2 subfamily.

The protein localises to the cytoplasm. One of the essential components for the initiation of protein synthesis. Protects formylmethionyl-tRNA from spontaneous hydrolysis and promotes its binding to the 30S ribosomal subunits. Also involved in the hydrolysis of GTP during the formation of the 70S ribosomal complex. This Legionella pneumophila (strain Lens) protein is Translation initiation factor IF-2.